We begin with the raw amino-acid sequence, 949 residues long: Translation initiation factor IF-2 (949 aa).

3 disordered regions span residues 61–122, 139–159, and 171–284; these read IQAN…PIIK, VENT…QKLQ, and LTQS…NKSH. Composition is skewed to basic and acidic residues over residues 112–122 and 150–159; these read KKKEAPAPIIK and QIEKAKQKLQ. The span at 174 to 190 shows a compositional bias: low complexity; that stretch reads SNTNTTNNANSASNVSN. The segment covering 191–208 has biased composition (basic and acidic residues); sequence AKKEISEVKKQEQEIKRH. Over residues 209 to 220 the composition is skewed to basic residues; the sequence is ENIKRRTGFRVI. The span at 249 to 264 shows a compositional bias: basic and acidic residues; it reads EDIKKEWQEKDKQETK. Positions 448–617 constitute a tr-type G domain; it reads ERPPVVTIMG…LIQADIMELK (170 aa). The segment at 457-464 is G1; the sequence is GHVDHGKT. 457-464 provides a ligand contact to GTP; that stretch reads GHVDHGKT. The interval 482 to 486 is G2; sequence GITQH. The G3 stretch occupies residues 503–506; it reads DTPG. Residues 503–507 and 557–560 contribute to the GTP site; these read DTPGH and NKMD. Residues 557–560 are G4; that stretch reads NKMD. The segment at 593–595 is G5; the sequence is SAK.

This sequence belongs to the TRAFAC class translation factor GTPase superfamily. Classic translation factor GTPase family. IF-2 subfamily.

It is found in the cytoplasm. In terms of biological role, one of the essential components for the initiation of protein synthesis. Protects formylmethionyl-tRNA from spontaneous hydrolysis and promotes its binding to the 30S ribosomal subunits. Also involved in the hydrolysis of GTP during the formation of the 70S ribosomal complex. This is Translation initiation factor IF-2 (infB) from Helicobacter pylori (strain J99 / ATCC 700824) (Campylobacter pylori J99).